The sequence spans 103 residues: MYAVFQSGGKQHRVTEGETVRLEKLSNVTGEKINFNQVLMISDGETIKVGAPLINGGLVQAEVMAHGRADKIKIIKFRRRKHYRKQQGHRQWFTDVKIIGIIS.

The protein belongs to the bacterial ribosomal protein bL21 family. Part of the 50S ribosomal subunit. Contacts protein L20.

Functionally, this protein binds to 23S rRNA in the presence of protein L20. The protein is Large ribosomal subunit protein bL21 of Hamiltonella defensa subsp. Acyrthosiphon pisum (strain 5AT).